Here is a 352-residue protein sequence, read N- to C-terminus: Zona pellucida-binding protein 2 (352 aa).

Positions 1 to 28 (MAGGGGRPCSPQRALLGMVAIMAVVAEA) are cleaved as a signal peptide. Residues Asn-110 and Asn-309 are each glycosylated (N-linked (GlcNAc...) asparagine).

This sequence belongs to the zona pellucida-binding protein Sp38 family.

Its subcellular location is the secreted. It is found in the cytoplasmic vesicle. The protein localises to the secretory vesicle. The protein resides in the acrosome. May be implicated in the gamete interaction during fertilization. This chain is Zona pellucida-binding protein 2 (ZPBP2), found in Gallus gallus (Chicken).